Consider the following 1687-residue polypeptide: Vitellogenin-2 (1687 aa).

Residues 1–15 (MRVLVLALTVALVAG) form the signal peptide. The region spanning 24 to 663 (FAPGKTYEYK…DAATVLPKNI (640 aa)) is the Vitellogenin domain. N-linked (GlcNAc...) asparagine glycosylation is found at N941, N945, N954, N1004, N1019, and N1083. Residues 1081–1174 (LKNSTKASSS…SSSSSKTKWQ (94 aa)) are disordered. Low complexity predominate over residues 1088–1127 (SSSSSGSSRSSRSRSSSSSSSSSSSSSSRSSSSSSRSSSS). N-linked (GlcNAc...) asparagine glycosylation is present at N1142. Low complexity predominate over residues 1148-1169 (SSSSSSSSSSSSSSSSSSSSSS). 7 N-linked (GlcNAc...) asparagine glycosylation sites follow: N1179, N1257, N1292, N1342, N1361, N1366, and N1390. The 177-residue stretch at 1417–1593 (AECTVVEDTV…SWVLPAKSCR (177 aa)) folds into the VWFD domain. 2 disulfide bridges follow: C1419–C1556 and C1442–C1592. Residues N1577 and N1655 are each glycosylated (N-linked (GlcNAc...) asparagine).

Phosvitin, an egg yolk storage protein, is one of the most highly phosphorylated (10%) proteins in nature. As to expression, produced by the liver, secreted into the blood and then sequestered by receptor mediated endocytosis into growing oocytes, where it is generally cleaved, giving rise to the respective yolk components lipovitellins and phosvitin.

Functionally, precursor of the egg-yolk proteins that are sources of nutrients during early development of oviparous organisms. The protein is Vitellogenin-2 of Fundulus heteroclitus (Killifish).